The sequence spans 193 residues: Imidazoleglycerol-phosphate dehydratase (193 aa).

This sequence belongs to the imidazoleglycerol-phosphate dehydratase family.

The protein resides in the cytoplasm. It carries out the reaction D-erythro-1-(imidazol-4-yl)glycerol 3-phosphate = 3-(imidazol-4-yl)-2-oxopropyl phosphate + H2O. Its pathway is amino-acid biosynthesis; L-histidine biosynthesis; L-histidine from 5-phospho-alpha-D-ribose 1-diphosphate: step 6/9. The polypeptide is Imidazoleglycerol-phosphate dehydratase (Saccharolobus islandicus (strain M.14.25 / Kamchatka #1) (Sulfolobus islandicus)).